A 931-amino-acid polypeptide reads, in one-letter code: G patch domain-containing protein 1 (931 aa).

The span at 1–12 (MAALDSDSDEDL) shows a compositional bias: acidic residues. Disordered stretches follow at residues 1–41 (MAAL…TVRD), 72–92 (TPSS…LGPE), and 169–213 (QGIG…YLPE). At Ala2 the chain carries N-acetylalanine. A phosphoserine mark is found at Ser6 and Ser8. Positions 72-81 (TPSSFVSSRQ) are enriched in polar residues. Residues 152–198 (KLSVGFELLRKMGWKEGQGIGPRVKRRPRRQKPDPGVKIYGCALPPG) enclose the G-patch domain. A compositionally biased stretch (acidic residues) spans 202 to 211 (GSEDEDDDYL). A Glycyl lysine isopeptide (Lys-Gly) (interchain with G-Cter in SUMO2) cross-link involves residue Lys313. Phosphoserine occurs at positions 358 and 479. Disordered regions lie at residues 567-594 (SRFT…VSDK) and 659-931 (SPVT…LRRQ). The span at 582 to 593 (EVPRDQENDVSD) shows a compositional bias: basic and acidic residues. Positions 659–668 (SPVTQASSEK) are enriched in polar residues. The segment covering 669 to 695 (VAQHRASDKSRKPSRWDTSKEEKKEDS) has biased composition (basic and acidic residues). Ser715 bears the Phosphoserine mark. A compositionally biased stretch (acidic residues) spans 769–780 (SEDEQGDSEDDQ). Over residues 781-792 (EGTREADFKSSQ) the composition is skewed to basic and acidic residues. A compositionally biased stretch (basic residues) spans 852 to 888 (EKHKKNKEKHKTKKEHRRKKEKKKKHRKHKHKGKQKN). Low complexity predominate over residues 896–905 (SSESTDSSDS). Residues 922–931 (RLKRLPLRRQ) are compositionally biased toward basic residues.

It belongs to the GPATCH1 family.

The chain is G patch domain-containing protein 1 (GPATCH1) from Bos taurus (Bovine).